Reading from the N-terminus, the 256-residue chain is Thiazole synthase (256 aa).

Lys-96 functions as the Schiff-base intermediate with DXP in the catalytic mechanism. 1-deoxy-D-xylulose 5-phosphate-binding positions include Gly-157, 183 to 184 (AG), and 205 to 206 (NT).

This sequence belongs to the ThiG family. As to quaternary structure, homotetramer. Forms heterodimers with either ThiH or ThiS.

The protein resides in the cytoplasm. It carries out the reaction [ThiS sulfur-carrier protein]-C-terminal-Gly-aminoethanethioate + 2-iminoacetate + 1-deoxy-D-xylulose 5-phosphate = [ThiS sulfur-carrier protein]-C-terminal Gly-Gly + 2-[(2R,5Z)-2-carboxy-4-methylthiazol-5(2H)-ylidene]ethyl phosphate + 2 H2O + H(+). Its pathway is cofactor biosynthesis; thiamine diphosphate biosynthesis. In terms of biological role, catalyzes the rearrangement of 1-deoxy-D-xylulose 5-phosphate (DXP) to produce the thiazole phosphate moiety of thiamine. Sulfur is provided by the thiocarboxylate moiety of the carrier protein ThiS. In vitro, sulfur can be provided by H(2)S. This is Thiazole synthase from Bacillus cereus (strain G9842).